Reading from the N-terminus, the 151-residue chain is Acidic phospholipase A2 6 (151 aa).

An N-terminal signal peptide occupies residues methionine 1–leucine 27. Cystine bridges form between cysteine 38–cysteine 104, cysteine 54–cysteine 151, cysteine 56–cysteine 72, cysteine 71–cysteine 132, cysteine 78–cysteine 125, cysteine 88–cysteine 118, and cysteine 111–cysteine 123. Tyrosine 55, glycine 57, and glycine 59 together coordinate Ca(2+). The active site involves histidine 75. Ca(2+) is bound at residue aspartate 76. The active site involves aspartate 126.

This sequence belongs to the phospholipase A2 family. Group I subfamily. D49 sub-subfamily. It depends on Ca(2+) as a cofactor. Expressed by the venom gland.

It is found in the secreted. It catalyses the reaction a 1,2-diacyl-sn-glycero-3-phosphocholine + H2O = a 1-acyl-sn-glycero-3-phosphocholine + a fatty acid + H(+). Its function is as follows. PLA2 catalyzes the calcium-dependent hydrolysis of the 2-acyl groups in 3-sn-phosphoglycerides. This chain is Acidic phospholipase A2 6, found in Tropidechis carinatus (Australian rough-scaled snake).